Consider the following 176-residue polypeptide: MLQSPSSPYPRTITLIGMMGVGKSTIGRRLASQLNMPFSDSDLEIEEAAGQSITEIFARYGENYFRNGERRVISRLIAGEPKVLAVGGGAFMDEETRKLVLEKTLAIWVKADIDTLAERVTKQADRPLLIGHDVRTRLQELADIRDSFYAMAPLHVWTGAQPHEEIVDAIIMALPR.

17 to 24 (GMMGVGKS) provides a ligand contact to ATP.

Belongs to the shikimate kinase family.

It is found in the cytoplasm. The enzyme catalyses shikimate + ATP = 3-phosphoshikimate + ADP + H(+). The protein operates within metabolic intermediate biosynthesis; chorismate biosynthesis; chorismate from D-erythrose 4-phosphate and phosphoenolpyruvate: step 5/7. The polypeptide is Shikimate kinase (Zymomonas mobilis subsp. mobilis (strain ATCC 31821 / ZM4 / CP4)).